Here is a 211-residue protein sequence, read N- to C-terminus: Troponin I, cardiac muscle (211 aa).

The segment at 1-25 (MADESSDAAGEPQPAPAPVRRRSSA) is disordered. Alanine 2 is modified (N-acetylalanine). Phosphoserine is present on residues serine 5 and serine 6. Residues serine 23 and serine 24 each carry the phosphoserine; by PKA and PKD/PRKD1 modification. Tyrosine 27 carries the post-translational modification Phosphotyrosine. The residue at position 32 (threonine 32) is a Phosphothreonine; by STK4/MST1. Residues 33–80 (EPHAKKKSKISASRKLQLKTLMLQIAKQEMEREAEERRGEKGRVLSTR) are involved in binding TNC. Phosphoserine; by PKC/PRKCE occurs at positions 43 and 45. The residue at position 52 (threonine 52) is a Phosphothreonine; by STK4/MST1. Serine 78 carries the phosphoserine modification. The residue at position 79 (threonine 79) is a Phosphothreonine. Phosphothreonine; by STK4/MST1 occurs at positions 130 and 144. The involved in binding TNC and actin stretch occupies residues 130–151 (TQKIYDLRGKFKRPTLRRVRIS). A Phosphoserine; by PAK3 modification is found at serine 151. Residues serine 167 and serine 200 each carry the phosphoserine modification.

Belongs to the troponin I family. As to quaternary structure, interacts with TRIM63. Binds to actin and tropomyosin. Interacts with STK4/MST1. Phosphorylated at Ser-23 and Ser-24 by PRKD1; phosphorylation reduces myofilament calcium sensitivity. Phosphorylated preferentially at Thr-32. Phosphorylation by STK4/MST1 alters its binding affinity to TNNC1 (cardiac Tn-C) and TNNT2 (cardiac Tn-T). Phosphorylated at Ser-43 and Ser-45 by PRKCE; phosphorylation increases myocardium contractile dysfunction.

Functionally, troponin I is the inhibitory subunit of troponin, the thin filament regulatory complex which confers calcium-sensitivity to striated muscle actomyosin ATPase activity. In Rattus norvegicus (Rat), this protein is Troponin I, cardiac muscle (Tnni3).